The chain runs to 230 residues: Sugar fermentation stimulation protein homolog (230 aa).

It belongs to the SfsA family.

The protein is Sugar fermentation stimulation protein homolog of Clostridium botulinum (strain 657 / Type Ba4).